Consider the following 715-residue polypeptide: Fatty acid oxidation complex subunit alpha (715 aa).

Positions 1 to 190 (MIYEGKAITV…KVGAVDAVVA (190 aa)) are enoyl-CoA hydratase/isomerase. Asp-297 serves as a coordination point for substrate. The 3-hydroxyacyl-CoA dehydrogenase stretch occupies residues 312–715 (HDVKQAAVLG…MAKNGQRFFN (404 aa)). Residues Met-325, Asp-344, 401–403 (VVE), Lys-408, and Ser-430 each bind NAD(+). The active-site For 3-hydroxyacyl-CoA dehydrogenase activity is His-451. Asn-454 contacts NAD(+). 2 residues coordinate substrate: Asn-501 and Tyr-660.

This sequence in the N-terminal section; belongs to the enoyl-CoA hydratase/isomerase family. The protein in the C-terminal section; belongs to the 3-hydroxyacyl-CoA dehydrogenase family. As to quaternary structure, heterotetramer of two alpha chains (FadB) and two beta chains (FadA).

The enzyme catalyses a (3S)-3-hydroxyacyl-CoA + NAD(+) = a 3-oxoacyl-CoA + NADH + H(+). The catalysed reaction is a (3S)-3-hydroxyacyl-CoA = a (2E)-enoyl-CoA + H2O. It catalyses the reaction a 4-saturated-(3S)-3-hydroxyacyl-CoA = a (3E)-enoyl-CoA + H2O. It carries out the reaction (3S)-3-hydroxybutanoyl-CoA = (3R)-3-hydroxybutanoyl-CoA. The enzyme catalyses a (3Z)-enoyl-CoA = a 4-saturated (2E)-enoyl-CoA. The catalysed reaction is a (3E)-enoyl-CoA = a 4-saturated (2E)-enoyl-CoA. It participates in lipid metabolism; fatty acid beta-oxidation. Involved in the aerobic and anaerobic degradation of long-chain fatty acids via beta-oxidation cycle. Catalyzes the formation of 3-oxoacyl-CoA from enoyl-CoA via L-3-hydroxyacyl-CoA. It can also use D-3-hydroxyacyl-CoA and cis-3-enoyl-CoA as substrate. This Pseudomonas putida (strain ATCC 700007 / DSM 6899 / JCM 31910 / BCRC 17059 / LMG 24140 / F1) protein is Fatty acid oxidation complex subunit alpha.